The chain runs to 30 residues: Cycloviolacin-H3 (30 aa).

The segment at residues 1-30 is a cross-link (cyclopeptide (Gly-Asn)); it reads GLPVCGETCFGGTCNTPGCICDPWPVCTRN. 3 disulfides stabilise this stretch: C5-C19, C9-C21, and C14-C27.

In terms of processing, this is a cyclic peptide.

Its function is as follows. Probably participates in a plant defense mechanism. In Viola hederacea (Australian violet), this protein is Cycloviolacin-H3.